A 348-amino-acid chain; its full sequence is Anthranilate phosphoribosyltransferase (348 aa).

5-phospho-alpha-D-ribose 1-diphosphate contacts are provided by residues Gly89, 92-93 (GD), Thr97, 99-102 (NIST), 117-125 (KHGNRSVSS), and Ser129. Gly89 is an anthranilate binding site. Position 101 (Ser101) interacts with Mg(2+). Residue Asn120 participates in anthranilate binding. Arg175 is a binding site for anthranilate. Asp233 and Glu234 together coordinate Mg(2+).

This sequence belongs to the anthranilate phosphoribosyltransferase family. In terms of assembly, homodimer. The cofactor is Mg(2+).

It catalyses the reaction N-(5-phospho-beta-D-ribosyl)anthranilate + diphosphate = 5-phospho-alpha-D-ribose 1-diphosphate + anthranilate. Its pathway is amino-acid biosynthesis; L-tryptophan biosynthesis; L-tryptophan from chorismate: step 2/5. Functionally, catalyzes the transfer of the phosphoribosyl group of 5-phosphorylribose-1-pyrophosphate (PRPP) to anthranilate to yield N-(5'-phosphoribosyl)-anthranilate (PRA). The sequence is that of Anthranilate phosphoribosyltransferase from Shewanella putrefaciens (strain CN-32 / ATCC BAA-453).